Reading from the N-terminus, the 343-residue chain is Single-pass membrane and coiled-coil domain-containing protein 2 (343 aa).

The segment covering 86–99 (EHDQDLSKQDKQET) has biased composition (basic and acidic residues). Residues 86–108 (EHDQDLSKQDKQETDVDEDPQAS) are disordered. Positions 152–238 (TEKIDNIIKK…SAKLRMYQME (87 aa)) form a coiled coil. A helical transmembrane segment spans residues 284–304 (IFIMFDVLTVTGLLCYILFFG).

Its subcellular location is the membrane. The protein is Single-pass membrane and coiled-coil domain-containing protein 2 (SMCO2) of Homo sapiens (Human).